Consider the following 156-residue polypeptide: Arginine repressor (156 aa).

The protein belongs to the ArgR family.

The protein resides in the cytoplasm. Its pathway is amino-acid biosynthesis; L-arginine biosynthesis [regulation]. In terms of biological role, regulates arginine biosynthesis genes. The polypeptide is Arginine repressor (Klebsiella pneumoniae (strain 342)).